The sequence spans 631 residues: Shootin-1 (631 aa).

M1 carries the post-translational modification N-acetylmethionine. Phosphoserine occurs at positions 3 and 4. The stretch at 7–353 (EKQLQLITSL…RVNQSENSVP (347 aa)) forms a coiled coil. The residue at position 101 (S101) is a Phosphoserine; by PAK1. Position 249 is a phosphoserine (S249). Positions 343–511 (KRVNQSENSV…SESKSMPVLG (169 aa)) are disordered. Residues 352 to 369 (VPPPPPPPPPLPPPPPNP) show a composition bias toward pro residues. Phosphoserine is present on S375. Positions 403 to 418 (TDLKRQAVEEMMDRIK) are enriched in basic and acidic residues. Positions 456–465 (LNKSTSSRSL) are enriched in polar residues. A Phosphoserine modification is found at S473. The residue at position 487 (T487) is a Phosphothreonine. Residues 490-505 (ADSSSPTGILATSESK) are compositionally biased toward polar residues. Phosphoserine is present on S494. The residue at position 496 (T496) is a Phosphothreonine. Phosphoserine is present on residues S506, S515, S532, and S534. 2 disordered regions span residues 524 to 566 (KTLE…IGCR) and 579 to 631 (VVVL…SSNC). Residue T537 is modified to Phosphothreonine. Polar residues predominate over residues 550–561 (CTSSKVTFQPPS). Positions 590–631 (PQTKDQVAEKDPTQHKEDEGEIQPENKEDSIENVRETDSSNC) are enriched in basic and acidic residues.

It belongs to the shootin family. Interacts with L1CAM; this interaction occurs in axonal growth cones. Interacts with actin filament retrograde flow; this interaction is enhanced in a netrin-1- and PAK1-dependent manner and promotes F-actin-substrate coupling and concomitant formation of traction forces at axonal growth cones. Interacts with RUFY3. Interacts with PFN2. Interacts (via N-terminus) with KIF20B; this interaction is direct and promotes the association of SHTN1 to microtubules in primary neurons. Associates with microtubule. In terms of processing, phosphorylated on Ser-101 and Ser-249 by PAK1 through a CDC42- and RAC1-dependent signaling pathway, which enhances its association with F-actin retrograde flow in filopodia and lamellipodia of axonal growth cones. Phosphorylation on Ser-101 and Ser-249 is increased by netrin-1.

The protein localises to the perikaryon. The protein resides in the cell projection. Its subcellular location is the axon. It is found in the growth cone. It localises to the cytoplasm. The protein localises to the cytoskeleton. The protein resides in the filopodium. Its subcellular location is the lamellipodium. Its function is as follows. Involved in the generation of internal asymmetric signals required for neuronal polarization and neurite outgrowth. Mediates netrin-1-induced F-actin-substrate coupling or 'clutch engagement' within the axon growth cone through activation of CDC42, RAC1 and PAK1-dependent signaling pathway, thereby converting the F-actin retrograde flow into traction forces, concomitantly with filopodium extension and axon outgrowth. Plays a role in cytoskeletal organization by regulating the subcellular localization of phosphoinositide 3-kinase (PI3K) activity at the axonal growth cone. Also plays a role in regenerative neurite outgrowth. In the developing cortex, cooperates with KIF20B to promote both the transition from the multipolar to the bipolar stage and the radial migration of cortical neurons from the ventricular zone toward the superficial layer of the neocortex. Involved in the accumulation of phosphatidylinositol 3,4,5-trisphosphate (PIP3) in the growth cone of primary hippocampal neurons. This chain is Shootin-1, found in Homo sapiens (Human).